Here is a 315-residue protein sequence, read N- to C-terminus: Taste receptor type 2 member 3 (315 aa).

Residues methionine 1–aspartate 5 lie on the Extracellular side of the membrane. A helical transmembrane segment spans residues glycine 6–isoleucine 26. The Cytoplasmic portion of the chain corresponds to glycine 27 to serine 41. A helical transmembrane segment spans residues leucine 42 to leucine 62. The Extracellular segment spans residues threonine 63–histidine 93. A helical membrane pass occupies residues leucine 94 to serine 114. Over histidine 115–arginine 127 the chain is Cytoplasmic. The chain crosses the membrane as a helical span at residues valine 128–isoleucine 148. Topologically, residues asparagine 149–threonine 185 are extracellular. N-linked (GlcNAc...) asparagine glycosylation occurs at asparagine 165. A helical membrane pass occupies residues leucine 186–leucine 206. Over glycine 207–arginine 233 the chain is Cytoplasmic. Residues isoleucine 234–phenylalanine 254 form a helical membrane-spanning segment. Residues glycine 255 to lysine 265 lie on the Extracellular side of the membrane. A helical membrane pass occupies residues methionine 266–glycine 286. Residues asparagine 287–serine 315 lie on the Cytoplasmic side of the membrane.

This sequence belongs to the G-protein coupled receptor T2R family.

It localises to the membrane. In terms of biological role, gustducin-coupled receptor implicated in the perception of bitter compounds in the oral cavity and the gastrointestinal tract. Signals through PLCB2 and the calcium-regulated cation channel TRPM5. This is Taste receptor type 2 member 3 (TAS2R3) from Papio hamadryas (Hamadryas baboon).